A 740-amino-acid chain; its full sequence is E3 ubiquitin-protein ligase DTX3L (740 aa).

A2 carries the post-translational modification N-acetylalanine. Position 9 is a phosphoserine (S9). 3 disordered regions span residues 96 to 119, 195 to 231, and 524 to 551; these read NTRP…MHQH, SEQK…KAEQ, and HETP…SEAS. 2 stretches are compositionally biased toward polar residues: residues 98-111 and 195-205; these read RPQI…QAET and SEQKQQFSPSM. S202 bears the Phosphoserine mark. Over residues 206–218 the composition is skewed to basic and acidic residues; it reads TERKPLSQQERDS. A phosphoserine mark is found at S221, S532, and S539. The segment at 561–600 adopts an RING-type zinc-finger fold; sequence CVICMDTISNKKVLPKCKHEFCAPCINKAMSYKPICPTCQ.

The protein belongs to the Deltex family. Homodimer and heterodimer. Can heterodimerize with DTX1, enhancing its ubiquitin ligase activity in vitro. Interacts (via N-terminus) with ADP ribosyltransferase PARP9/BAL1 (via PARP catalytic domain) forming a stable complex; the interaction is required to activate PARP9 but is dispensable for DTX3L catalytic activity. Forms a complex with STAT1 and PARP9 independently of IFNB1 or IFNG-mediated STAT1 'Tyr-701' phosphorylation. Found in a complex with PARP9, STAT1 and H2BC9. Found in a complex with E3 ligase ITCH and ESCRT-0 components HGS and STAM. Interacts (via C-terminus) with ITCH; the interaction is increased upon CXCL12 stimulation and inhibits ITCH catalytic activity; the interaction is direct. Interacts with HGS and STAM; the interaction brings together HGS and STAM and promotes their recruitment to early endosomes. In terms of assembly, (Microbial infection) Interacts with encephalomyocarditis virus (EMCV) C3 protease; the interaction results in C3 protease 'Lys-48'-linked ubiquitination. As to quaternary structure, (Microbial infection) Interacts with human rhinovirus (HRV) C3 protease; the interaction results in C3 protease 'Lys-48'-linked ubiquitination. Post-translationally, autoubiquitinated.

Its subcellular location is the cytoplasm. The protein resides in the nucleus. It localises to the early endosome membrane. It is found in the lysosome membrane. It catalyses the reaction S-ubiquitinyl-[E2 ubiquitin-conjugating enzyme]-L-cysteine + [acceptor protein]-L-lysine = [E2 ubiquitin-conjugating enzyme]-L-cysteine + N(6)-ubiquitinyl-[acceptor protein]-L-lysine.. It participates in protein modification; protein ubiquitination. With respect to regulation, binding to PARP9 enhances DTX3L catalytic activity. Functionally, E3 ubiquitin-protein ligase which, in association with ADP-ribosyltransferase PARP9, plays a role in DNA damage repair and in interferon-mediated antiviral responses. Monoubiquitinates several histones, including histone H2A, H2B, H3 and H4. In response to DNA damage, mediates monoubiquitination of 'Lys-91' of histone H4 (H4K91ub1). The exact role of H4K91ub1 in DNA damage response is still unclear but it may function as a licensing signal for additional histone H4 post-translational modifications such as H4 'Lys-20' methylation (H4K20me). PARP1-dependent PARP9-DTX3L-mediated ubiquitination promotes the rapid and specific recruitment of 53BP1/TP53BP1, UIMC1/RAP80, and BRCA1 to DNA damage sites. By monoubiquitinating histone H2B H2BC9/H2BJ and thereby promoting chromatin remodeling, positively regulates STAT1-dependent interferon-stimulated gene transcription and thus STAT1-mediated control of viral replication. Independently of its catalytic activity, promotes the sorting of chemokine receptor CXCR4 from early endosome to lysosome following CXCL12 stimulation by reducing E3 ligase ITCH activity and thus ITCH-mediated ubiquitination of endosomal sorting complex required for transport ESCRT-0 components HGS and STAM. In addition, required for the recruitment of HGS and STAM to early endosomes. In association with PARP9, plays a role in antiviral responses by mediating 'Lys-48'-linked ubiquitination of encephalomyocarditis virus (EMCV) and human rhinovirus (HRV) C3 proteases and thus promoting their proteasomal-mediated degradation. The chain is E3 ubiquitin-protein ligase DTX3L (DTX3L) from Homo sapiens (Human).